Here is a 396-residue protein sequence, read N- to C-terminus: Cyclic GMP-AMP synthase-like receptor (396 aa).

Residues Ser-63 and 75-77 contribute to the ATP site; that span reads EFD. Glu-75, Asp-77, and Asp-194 together coordinate Mg(2+). Position 194 (Asp-194) interacts with GTP. ATP-binding positions include 241 to 244, Lys-262, and 275 to 279; these read QEQE and SYYLK. 3 residues coordinate Mn(2+): Val-286, Glu-287, and Asp-292. A disordered region spans residues 376–396; the sequence is IMNGGNPQQSANAENGSCLSM. Over residues 380–396 the composition is skewed to polar residues; the sequence is GNPQQSANAENGSCLSM.

The protein belongs to the mab-21 family. Mg(2+) is required as a cofactor. The cofactor is Mn(2+).

The enzyme catalyses GTP + ATP = 2',3'-cGAMP + 2 diphosphate. It carries out the reaction GTP + ATP = pppGp(2'-5')A + diphosphate. It catalyses the reaction pppGp(2'-5')A = 2',3'-cGAMP + diphosphate. Functionally, nucleotidyltransferase that catalyzes the formation of cyclic GMP-AMP (2',3'-cGAMP) from ATP and GTP and plays a key role in innate immunity. Acts as a key sensor of double-stranded RNA (dsRNA), the presence of dsRNA in the cytoplasm being a danger signal that triggers the immune responses. Directly binds dsRNA, activating the nucleotidyltransferase activity, leading to synthesis of 2',3'-cGAMP, a second messenger that binds to and activates Sting, thereby triggering the immune response via activation of the NF-kappa-B transcription factor. This is Cyclic GMP-AMP synthase-like receptor from Aethina tumida (Small hive beetle).